The primary structure comprises 178 residues: Oligoribonuclease (178 aa).

One can recognise an Exonuclease domain in the interval 7–168; the sequence is LIWIDLEMTG…DDIRESIAEL (162 aa). The active site involves Tyr-128.

It belongs to the oligoribonuclease family.

The protein resides in the cytoplasm. In terms of biological role, 3'-to-5' exoribonuclease specific for small oligoribonucleotides. The polypeptide is Oligoribonuclease (Pseudomonas savastanoi pv. phaseolicola (strain 1448A / Race 6) (Pseudomonas syringae pv. phaseolicola (strain 1448A / Race 6))).